Here is a 374-residue protein sequence, read N- to C-terminus: Heptahelical transmembrane protein 5 (374 aa).

Over 1 to 79 (MGDEAEIKEH…LSIFTIHNET (79 aa)) the chain is Cytoplasmic. Residues 80–100 (LNVWTHLIGFFLFLALTIYTA) traverse the membrane as a helical segment. The Extracellular portion of the chain corresponds to 101–191 (TKVPSVVDLH…LIFRPITRWP (91 aa)). The chain crosses the membrane as a helical span at residues 192–212 (FYAFLGGAIFCLLASSTCHLL). Residues 213-228 (SCHSERVSYIMLRLDY) lie on the Cytoplasmic side of the membrane. Residues 229–249 (AGIAALIATSFYPPVYYSFMC) form a helical membrane-spanning segment. At 250 to 256 (DPFFCNL) the chain is on the extracellular side. The helical transmembrane segment at 257-277 (YLGFITILGIATVLVSLLPVF) threads the bilayer. Over 278–288 (QSLEFRVVRAS) the chain is Cytoplasmic. A helical membrane pass occupies residues 289–309 (LFFGMGFSGLAPILHKLIIFW). The Extracellular portion of the chain corresponds to 310–313 (DQPE). A helical membrane pass occupies residues 314-334 (ALHMTGYEILMGLLYGLGAVV). The Cytoplasmic portion of the chain corresponds to 335–347 (YATRIPERWMPGK). Residues 348 to 368 (FDIAGHSHQLFHVLVVAGALT) traverse the membrane as a helical segment. Over 369–374 (HYRAGL) the chain is Extracellular.

It belongs to the ADIPOR family. As to expression, expressed in roots, leaves, stems and flowers.

It is found in the membrane. Its function is as follows. May play a role in abiotic stress response. The chain is Heptahelical transmembrane protein 5 (HHP5) from Arabidopsis thaliana (Mouse-ear cress).